Consider the following 539-residue polypeptide: Chaperonin GroEL 2 (539 aa).

ATP contacts are provided by residues 29–32 (TLGP), 86–90 (DGTTT), glycine 413, 477–479 (NAA), and aspartate 493. Residues 519–539 (VVDKPEEEDSAAAGHGHGHSH) form a disordered region.

This sequence belongs to the chaperonin (HSP60) family. As to quaternary structure, forms a cylinder of 14 subunits composed of two heptameric rings stacked back-to-back. Interacts with the co-chaperonin GroES.

It localises to the cytoplasm. It catalyses the reaction ATP + H2O + a folded polypeptide = ADP + phosphate + an unfolded polypeptide.. Functionally, together with its co-chaperonin GroES, plays an essential role in assisting protein folding. The GroEL-GroES system forms a nano-cage that allows encapsulation of the non-native substrate proteins and provides a physical environment optimized to promote and accelerate protein folding. The polypeptide is Chaperonin GroEL 2 (Saccharopolyspora erythraea (strain ATCC 11635 / DSM 40517 / JCM 4748 / NBRC 13426 / NCIMB 8594 / NRRL 2338)).